A 274-amino-acid chain; its full sequence is MTHVFEVYPKVNVFLKILHKEGAYHKIISRMCLVKNKLKDIISVKNALSFSLKGDFDCPLEENSLFKALQVLKKFLVQKNFSHSVIKSLDTLAIEVEKNIPTQAGLGGGSADAGGLLYHLNQMFDWRLSLKELYTMGSLVGADTNFFISQYKSANATSYGEVIENFEEESLEDRLEIYAPNHVFCSTKAVYQAYKPETCFFQAKEWLKKTSLECLKTYDRNELNDLLKPALRTNPALKDIESQLSKEWFFSGSGSAFFRLKNTQKGANETHCQQ.

Residue lysine 10 is part of the active site. Residue 101 to 111 coordinates ATP; the sequence is PTQAGLGGGSA. Residue aspartate 143 is part of the active site.

This sequence belongs to the GHMP kinase family. IspE subfamily.

The enzyme catalyses 4-CDP-2-C-methyl-D-erythritol + ATP = 4-CDP-2-C-methyl-D-erythritol 2-phosphate + ADP + H(+). Its pathway is isoprenoid biosynthesis; isopentenyl diphosphate biosynthesis via DXP pathway; isopentenyl diphosphate from 1-deoxy-D-xylulose 5-phosphate: step 3/6. Catalyzes the phosphorylation of the position 2 hydroxy group of 4-diphosphocytidyl-2C-methyl-D-erythritol. In Helicobacter pylori (strain J99 / ATCC 700824) (Campylobacter pylori J99), this protein is 4-diphosphocytidyl-2-C-methyl-D-erythritol kinase.